Here is a 660-residue protein sequence, read N- to C-terminus: Bifunctional polymyxin resistance protein ArnA (660 aa).

The tract at residues 1-304 (MKTVVFAYHD…TLGLVQGSRL (304 aa)) is formyltransferase ArnAFT. Position 86–88 (86–88 (HLI)) interacts with (6R)-10-formyltetrahydrofolate. Residue H104 is the Proton donor; for formyltransferase activity of the active site. (6R)-10-formyltetrahydrofolate is bound by residues R114 and 136–140 (VKRAD). The segment at 314-660 (RRTRVLILGV…RTVDLTDKPS (347 aa)) is dehydrogenase ArnADH. Residues D347 and 368 to 369 (DI) each bind NAD(+). Residues A393, Y398, and 432 to 433 (TS) each bind UDP-alpha-D-glucuronate. E434 serves as the catalytic Proton acceptor; for decarboxylase activity. Residues R460, N492, 526-535 (KLIDGGKQKR), and Y613 each bind UDP-alpha-D-glucuronate. R619 functions as the Proton donor; for decarboxylase activity in the catalytic mechanism.

This sequence in the N-terminal section; belongs to the Fmt family. UDP-L-Ara4N formyltransferase subfamily. The protein in the C-terminal section; belongs to the NAD(P)-dependent epimerase/dehydratase family. UDP-glucuronic acid decarboxylase subfamily. As to quaternary structure, homohexamer, formed by a dimer of trimers.

It catalyses the reaction UDP-alpha-D-glucuronate + NAD(+) = UDP-beta-L-threo-pentopyranos-4-ulose + CO2 + NADH. The enzyme catalyses UDP-4-amino-4-deoxy-beta-L-arabinose + (6R)-10-formyltetrahydrofolate = UDP-4-deoxy-4-formamido-beta-L-arabinose + (6S)-5,6,7,8-tetrahydrofolate + H(+). It participates in nucleotide-sugar biosynthesis; UDP-4-deoxy-4-formamido-beta-L-arabinose biosynthesis; UDP-4-deoxy-4-formamido-beta-L-arabinose from UDP-alpha-D-glucuronate: step 1/3. It functions in the pathway nucleotide-sugar biosynthesis; UDP-4-deoxy-4-formamido-beta-L-arabinose biosynthesis; UDP-4-deoxy-4-formamido-beta-L-arabinose from UDP-alpha-D-glucuronate: step 3/3. Its pathway is bacterial outer membrane biogenesis; lipopolysaccharide biosynthesis. Functionally, bifunctional enzyme that catalyzes the oxidative decarboxylation of UDP-glucuronic acid (UDP-GlcUA) to UDP-4-keto-arabinose (UDP-Ara4O) and the addition of a formyl group to UDP-4-amino-4-deoxy-L-arabinose (UDP-L-Ara4N) to form UDP-L-4-formamido-arabinose (UDP-L-Ara4FN). The modified arabinose is attached to lipid A and is required for resistance to polymyxin and cationic antimicrobial peptides. The sequence is that of Bifunctional polymyxin resistance protein ArnA from Shigella boydii serotype 4 (strain Sb227).